Here is a 397-residue protein sequence, read N- to C-terminus: Elongation factor Tu (397 aa).

In terms of domain architecture, tr-type G spans 10-207 (KPHVNIGTIG…ACDSYIPEPQ (198 aa)). The tract at residues 19–26 (GHIDHGKT) is G1. Residue 19–26 (GHIDHGKT) coordinates GTP. Thr26 contributes to the Mg(2+) binding site. Positions 60 to 64 (GITIA) are G2. Positions 81 to 84 (DCPG) are G3. GTP-binding positions include 81 to 85 (DCPGH) and 136 to 139 (NKCD). The G4 stretch occupies residues 136 to 139 (NKCD). Positions 174 to 176 (SAL) are G5.

Belongs to the TRAFAC class translation factor GTPase superfamily. Classic translation factor GTPase family. EF-Tu/EF-1A subfamily. Monomer.

It is found in the cytoplasm. The catalysed reaction is GTP + H2O = GDP + phosphate + H(+). In terms of biological role, GTP hydrolase that promotes the GTP-dependent binding of aminoacyl-tRNA to the A-site of ribosomes during protein biosynthesis. The protein is Elongation factor Tu of Nitratidesulfovibrio vulgaris (strain DSM 19637 / Miyazaki F) (Desulfovibrio vulgaris).